Reading from the N-terminus, the 150-residue chain is UPF0756 membrane protein HDEF_0364 (150 aa).

5 helical membrane-spanning segments follow: residues 1–21, 28–48, 51–71, 88–108, and 123–143; these read MMFF…GLIS, ISVV…FPWV, YALK…IASG, ILGI…VSLM, and ILGV…AGLL.

This sequence belongs to the UPF0756 family.

The protein resides in the cell membrane. This is UPF0756 membrane protein HDEF_0364 from Hamiltonella defensa subsp. Acyrthosiphon pisum (strain 5AT).